We begin with the raw amino-acid sequence, 203 residues long: Synaptosomal-associated protein 25-B (203 aa).

Residues 1–11 (MADEADMRNEL) are compositionally biased toward basic and acidic residues. A disordered region spans residues 1 to 25 (MADEADMRNELTDMQARADQLGDES). T-SNARE coiled-coil homology domains are found at residues 19–81 (DQLG…LTDL) and 137–199 (DARE…ATKM).

Belongs to the SNAP-25 family.

The protein localises to the synapse. It localises to the synaptosome. Its subcellular location is the cell membrane. Functionally, may play an important role in the synaptic function of specific neuronal systems. Associates with proteins involved in vesicle docking and membrane fusion. This chain is Synaptosomal-associated protein 25-B (snap25b), found in Carassius auratus (Goldfish).